A 325-amino-acid chain; its full sequence is Beta-ketoacyl-[acyl-carrier-protein] synthase III (325 aa).

Active-site residues include C119 and H252. Residues 253-257 (QANLR) are ACP-binding. Residue N282 is part of the active site.

This sequence belongs to the thiolase-like superfamily. FabH family. In terms of assembly, homodimer.

Its subcellular location is the cytoplasm. It carries out the reaction malonyl-[ACP] + acetyl-CoA + H(+) = 3-oxobutanoyl-[ACP] + CO2 + CoA. The protein operates within lipid metabolism; fatty acid biosynthesis. Its function is as follows. Catalyzes the condensation reaction of fatty acid synthesis by the addition to an acyl acceptor of two carbons from malonyl-ACP. Catalyzes the first condensation reaction which initiates fatty acid synthesis and may therefore play a role in governing the total rate of fatty acid production. Possesses both acetoacetyl-ACP synthase and acetyl transacylase activities. Its substrate specificity determines the biosynthesis of branched-chain and/or straight-chain of fatty acids. The chain is Beta-ketoacyl-[acyl-carrier-protein] synthase III from Polaromonas naphthalenivorans (strain CJ2).